Here is a 506-residue protein sequence, read N- to C-terminus: MTLVVYNTLTRRKEVFQPFGGSESISADEAAGGEKPLVRMYVCGVTVYDLCHLGHARTYVVWDMVRRYLECRGYRVKYVQNFTDVDDKILKRALERGESMQAVAERFIAEYFQDMDRLNIKRADLYPRATRSLRAMFELIQSLELKGFAYRVRDPLAPQGETPAYDVYYAVRKFPDYGQLSGRKLEELEAGASGRVGEEGAGKRDPFDFALWKAAPPSEPGFESPWGWGRPGWHIECSAMVRETLGDHIDIHAGGADLIFPHHENELAQSEPITGKPLAKYWLHNGFVNVNGQKMSKSLGNFTTLRQALALYHPMALRLFLLQTHYRSPIDLTEAAMEAASHGWETLQKGIHCAQQFGQGGSPDSEAMRAFQTAMDDDFGTPGALALAFELAKELIREHNLLTHQGHTHLQPHLLRQKGAALLEILATLGFCWPQPAQGSEKAAANGELAKLPPLEDARIEELVAQRTAARKAKNFAEADRIREQLKALGITLIDQKDGTTRWLRQ.

Cys43 is a binding site for Zn(2+). The 'HIGH' region motif lies at 45–55 (VTVYDLCHLGH). Zn(2+) contacts are provided by Cys237, His262, and Glu266. A 'KMSKS' region motif is present at residues 294–298 (KMSKS). Lys297 lines the ATP pocket.

It belongs to the class-I aminoacyl-tRNA synthetase family. As to quaternary structure, monomer. Zn(2+) serves as cofactor.

Its subcellular location is the cytoplasm. The enzyme catalyses tRNA(Cys) + L-cysteine + ATP = L-cysteinyl-tRNA(Cys) + AMP + diphosphate. In Synechococcus sp. (strain JA-3-3Ab) (Cyanobacteria bacterium Yellowstone A-Prime), this protein is Cysteine--tRNA ligase.